We begin with the raw amino-acid sequence, 398 residues long: 4-hydroxy-3-methylbut-2-enyl diphosphate reductase (398 aa).

Cysteine 66 lines the [4Fe-4S] cluster pocket. Residue histidine 96 coordinates (2E)-4-hydroxy-3-methylbut-2-enyl diphosphate. Histidine 96 contacts dimethylallyl diphosphate. Position 96 (histidine 96) interacts with isopentenyl diphosphate. Residue cysteine 157 coordinates [4Fe-4S] cluster. Histidine 185 lines the (2E)-4-hydroxy-3-methylbut-2-enyl diphosphate pocket. Histidine 185 lines the dimethylallyl diphosphate pocket. Residue histidine 185 coordinates isopentenyl diphosphate. Glutamate 187 serves as the catalytic Proton donor. Residue threonine 250 participates in (2E)-4-hydroxy-3-methylbut-2-enyl diphosphate binding. Cysteine 288 serves as a coordination point for [4Fe-4S] cluster. Residues serine 317, serine 318, asparagine 319, and serine 379 each contribute to the (2E)-4-hydroxy-3-methylbut-2-enyl diphosphate site. Dimethylallyl diphosphate-binding residues include serine 317, serine 318, asparagine 319, and serine 379. The isopentenyl diphosphate site is built by serine 317, serine 318, asparagine 319, and serine 379.

It belongs to the IspH family. [4Fe-4S] cluster is required as a cofactor.

The enzyme catalyses isopentenyl diphosphate + 2 oxidized [2Fe-2S]-[ferredoxin] + H2O = (2E)-4-hydroxy-3-methylbut-2-enyl diphosphate + 2 reduced [2Fe-2S]-[ferredoxin] + 2 H(+). It catalyses the reaction dimethylallyl diphosphate + 2 oxidized [2Fe-2S]-[ferredoxin] + H2O = (2E)-4-hydroxy-3-methylbut-2-enyl diphosphate + 2 reduced [2Fe-2S]-[ferredoxin] + 2 H(+). Its pathway is isoprenoid biosynthesis; dimethylallyl diphosphate biosynthesis; dimethylallyl diphosphate from (2E)-4-hydroxy-3-methylbutenyl diphosphate: step 1/1. The protein operates within isoprenoid biosynthesis; isopentenyl diphosphate biosynthesis via DXP pathway; isopentenyl diphosphate from 1-deoxy-D-xylulose 5-phosphate: step 6/6. In terms of biological role, catalyzes the conversion of 1-hydroxy-2-methyl-2-(E)-butenyl 4-diphosphate (HMBPP) into a mixture of isopentenyl diphosphate (IPP) and dimethylallyl diphosphate (DMAPP). Acts in the terminal step of the DOXP/MEP pathway for isoprenoid precursor biosynthesis. The sequence is that of 4-hydroxy-3-methylbut-2-enyl diphosphate reductase from Synechococcus sp. (strain ATCC 27144 / PCC 6301 / SAUG 1402/1) (Anacystis nidulans).